The following is a 210-amino-acid chain: HTH-type transcriptional repressor FabR (210 aa).

The region spanning 10-70 (KTRRSLVEAA…TMVDESGLML (61 aa)) is the HTH tetR-type domain. A DNA-binding region (H-T-H motif) is located at residues 33–52 (SLREVAREAGIAPTSFYRHF).

As to quaternary structure, homodimer.

Its subcellular location is the cytoplasm. Represses the transcription of fabB, involved in unsaturated fatty acid (UFA) biosynthesis. By controlling UFA production, FabR directly influences the physical properties of the membrane bilayer. This chain is HTH-type transcriptional repressor FabR, found in Citrobacter koseri (strain ATCC BAA-895 / CDC 4225-83 / SGSC4696).